The sequence spans 382 residues: Succinate--CoA ligase [ADP-forming] subunit beta (382 aa).

The ATP-grasp domain occupies 9-237 (RDLLARYGIP…PSAEPEAERR (229 aa)). Residues Lys45, 52-54 (GRG), Ile94, and Glu99 contribute to the ATP site. The Mg(2+) site is built by Asn192 and Asp206. Residues Asn257 and 314–316 (GIT) each bind substrate.

This sequence belongs to the succinate/malate CoA ligase beta subunit family. As to quaternary structure, heterotetramer of two alpha and two beta subunits. Mg(2+) serves as cofactor.

The enzyme catalyses succinate + ATP + CoA = succinyl-CoA + ADP + phosphate. It catalyses the reaction GTP + succinate + CoA = succinyl-CoA + GDP + phosphate. It participates in carbohydrate metabolism; tricarboxylic acid cycle; succinate from succinyl-CoA (ligase route): step 1/1. In terms of biological role, succinyl-CoA synthetase functions in the citric acid cycle (TCA), coupling the hydrolysis of succinyl-CoA to the synthesis of either ATP or GTP and thus represents the only step of substrate-level phosphorylation in the TCA. The beta subunit provides nucleotide specificity of the enzyme and binds the substrate succinate, while the binding sites for coenzyme A and phosphate are found in the alpha subunit. The sequence is that of Succinate--CoA ligase [ADP-forming] subunit beta from Chloroflexus aggregans (strain MD-66 / DSM 9485).